The chain runs to 383 residues: Xylose/arabinose import ATP-binding protein XacJ (383 aa).

Positions 4 to 235 (IQLTDLTKRF…PNNLFVAEFI (232 aa)) constitute an ABC transporter domain. 36 to 43 (GPSGCGKS) lines the ATP pocket.

Belongs to the ABC transporter superfamily. Carbohydrate uptake transporter-1 (CUT1) (TC 3.A.1.1) family. In terms of assembly, the complex is composed of two ATP-binding proteins (XacJ and XacK), two transmembrane proteins (XacH and XacI) and a solute-binding protein (XacG).

It is found in the cell membrane. It catalyses the reaction D-xylose(out) + ATP + H2O = D-xylose(in) + ADP + phosphate + H(+). The enzyme catalyses L-arabinose(out) + ATP + H2O = L-arabinose(in) + ADP + phosphate + H(+). In terms of biological role, part of the ABC transporter complex XacGHIJK involved in the uptake of xylose and arabinose. Responsible for energy coupling to the transport system. The chain is Xylose/arabinose import ATP-binding protein XacJ from Haloferax volcanii (strain ATCC 29605 / DSM 3757 / JCM 8879 / NBRC 14742 / NCIMB 2012 / VKM B-1768 / DS2) (Halobacterium volcanii).